Here is a 412-residue protein sequence, read N- to C-terminus: Isovaleryl-CoA dehydrogenase, mitochondrial (412 aa).

A mitochondrion-targeting transit peptide spans 1 to 25; it reads MHKLFVARSVKSALFRIKNHQKPQF. Residues 154–163 and 187–189 each bind FAD; these read LAMSEPNAGS and WCT. S163 serves as a coordination point for substrate. Residues 209–210, Y264, and 271–274 contribute to the substrate site; these read SK and DLER. Catalysis depends on E273, which acts as the Proton acceptor. FAD is bound by residues R299, Q310, and 367 to 371; that span reads QCLGG. 394-395 provides a ligand contact to substrate; the sequence is AG. 396–398 serves as a coordination point for FAD; that stretch reads TSE.

It belongs to the acyl-CoA dehydrogenase family. Homotetramer. It depends on FAD as a cofactor. In terms of tissue distribution, expressed in flowers and tubers.

The protein localises to the mitochondrion. The catalysed reaction is 3-methylbutanoyl-CoA + oxidized [electron-transfer flavoprotein] + H(+) = 3-methylbut-2-enoyl-CoA + reduced [electron-transfer flavoprotein]. Its pathway is amino-acid degradation; L-leucine degradation; (S)-3-hydroxy-3-methylglutaryl-CoA from 3-isovaleryl-CoA: step 1/3. Its function is as follows. Involved in the catabolism of amino acids. Uses isovaleryl-CoA as substrate. Minor activity detected with 2-methylpalmitoyl-CoA or 2-methylbutanoyl-CoA, but no activity with short- and medium-straight chain acyl-CoA esters or with 2-methylhexanoyl-CoA. This is Isovaleryl-CoA dehydrogenase, mitochondrial (IVD) from Solanum tuberosum (Potato).